The following is a 446-amino-acid chain: Probable D-serine dehydratase (446 aa).

An N6-(pyridoxal phosphate)lysine modification is found at K116.

This sequence belongs to the serine/threonine dehydratase family. DsdA subfamily. Pyridoxal 5'-phosphate is required as a cofactor.

It carries out the reaction D-serine = pyruvate + NH4(+). This Bacillus thuringiensis (strain Al Hakam) protein is Probable D-serine dehydratase.